The following is a 139-amino-acid chain: Nucleoside diphosphate kinase (139 aa).

ATP is bound by residues Lys9, Phe57, Arg85, Thr91, Arg102, and Asn112. Catalysis depends on His115, which acts as the Pros-phosphohistidine intermediate.

Belongs to the NDK family. Homotetramer. The cofactor is Mg(2+).

The protein localises to the cytoplasm. The catalysed reaction is a 2'-deoxyribonucleoside 5'-diphosphate + ATP = a 2'-deoxyribonucleoside 5'-triphosphate + ADP. It catalyses the reaction a ribonucleoside 5'-diphosphate + ATP = a ribonucleoside 5'-triphosphate + ADP. In terms of biological role, major role in the synthesis of nucleoside triphosphates other than ATP. The ATP gamma phosphate is transferred to the NDP beta phosphate via a ping-pong mechanism, using a phosphorylated active-site intermediate. The protein is Nucleoside diphosphate kinase of Neorickettsia sennetsu (strain ATCC VR-367 / Miyayama) (Ehrlichia sennetsu).